The sequence spans 103 residues: Small ribosomal subunit protein bS6c (103 aa).

It belongs to the bacterial ribosomal protein bS6 family.

Its subcellular location is the plastid. It localises to the chloroplast. In terms of biological role, binds together with bS18 to 16S ribosomal RNA. The chain is Small ribosomal subunit protein bS6c from Thalassiosira pseudonana (Marine diatom).